The sequence spans 586 residues: Pyruvate kinase (586 aa).

Position 32 (R32) interacts with substrate. K(+) contacts are provided by N34, S36, D66, and T67. ATP is bound at residue 34–37 (NFSH). Residues R73 and K156 each contribute to the ATP site. A Mg(2+)-binding site is contributed by E222. Residues G245, D246, and T278 each coordinate substrate. D246 is a binding site for Mg(2+).

Belongs to the pyruvate kinase family. This sequence in the C-terminal section; belongs to the PEP-utilizing enzyme family. Homotetramer. Mg(2+) serves as cofactor. The cofactor is K(+).

The catalysed reaction is pyruvate + ATP = phosphoenolpyruvate + ADP + H(+). Its pathway is carbohydrate degradation; glycolysis; pyruvate from D-glyceraldehyde 3-phosphate: step 5/5. The polypeptide is Pyruvate kinase (pyk) (Sporosarcina psychrophila (Bacillus psychrophilus)).